Consider the following 281-residue polypeptide: NADPH-dependent 7-cyano-7-deazaguanine reductase (281 aa).

88–90 (IES) contacts substrate. NADPH is bound at residue 90-91 (SK). Residue cysteine 189 is the Thioimide intermediate of the active site. The active-site Proton donor is the aspartate 196. Substrate is bound at residue 228–229 (HE). 257-258 (RG) contributes to the NADPH binding site.

It belongs to the GTP cyclohydrolase I family. QueF type 2 subfamily. As to quaternary structure, homodimer.

It is found in the cytoplasm. It carries out the reaction 7-aminomethyl-7-carbaguanine + 2 NADP(+) = 7-cyano-7-deazaguanine + 2 NADPH + 3 H(+). It functions in the pathway tRNA modification; tRNA-queuosine biosynthesis. Catalyzes the NADPH-dependent reduction of 7-cyano-7-deazaguanine (preQ0) to 7-aminomethyl-7-deazaguanine (preQ1). This is NADPH-dependent 7-cyano-7-deazaguanine reductase from Yersinia pestis bv. Antiqua (strain Antiqua).